A 104-amino-acid chain; its full sequence is Small ribosomal subunit protein uS10 (104 aa).

The protein belongs to the universal ribosomal protein uS10 family. In terms of assembly, part of the 30S ribosomal subunit.

In terms of biological role, involved in the binding of tRNA to the ribosomes. The chain is Small ribosomal subunit protein uS10 from Hydrogenobaculum sp. (strain Y04AAS1).